The chain runs to 57 residues: Large ribosomal subunit protein bL32 (57 aa).

Residues 1–19 (MAVPKRRMSRSNTRSRRSQ) show a composition bias toward basic residues. Residues 1–21 (MAVPKRRMSRSNTRSRRSQWK) are disordered.

The protein belongs to the bacterial ribosomal protein bL32 family.

The polypeptide is Large ribosomal subunit protein bL32 (Mycobacteroides abscessus (strain ATCC 19977 / DSM 44196 / CCUG 20993 / CIP 104536 / JCM 13569 / NCTC 13031 / TMC 1543 / L948) (Mycobacterium abscessus)).